We begin with the raw amino-acid sequence, 463 residues long: Aurantioclavine synthase cnsA (463 aa).

One can recognise an FAD-binding PCMH-type domain in the interval 16-199 (ERFNQRGNVF…TQATVRVFPD (184 aa)).

This sequence belongs to the oxygen-dependent FAD-linked oxidoreductase family. Requires FAD as cofactor.

It functions in the pathway alkaloid biosynthesis. Functionally, FAD-linked oxidoreductase; part of the gene cluster that mediates the biosynthesis of communesins, a prominent class of indole alkaloids with great potential as pharmaceuticals. Communesins are biosynthesized by the coupling of tryptamine and aurantioclavine, two building blocks derived from L-tryptophan. The L-tryptophan decarboxylase cnsB converts L-tryptophan to tryptamine, whereas the tryptophan dimethylallyltransferase cnsF converts L-tryptophan to 4-dimethylallyl tryptophan which is further transformed to aurantioclavine by the aurantioclavine synthase cnsA, probably aided by the catalase cnsD. The cytochrome P450 monooxygenase cnsC catalyzes the heterodimeric coupling between the two different indole moieties, tryptamine and aurantioclavine, to construct vicinal quaternary stereocenters and yield the heptacyclic communesin scaffold. The O-methyltransferase cnsE then methylates the communesin scaffold to produce communesin K, the simplest characterized communesin that contains the heptacyclic core. The dioxygenase cnsJ converts communesin K into communesin I. Acylation to introduce the hexadienyl group at position N16 of communesin I by the acyltransferase cnsK leads to the production of communesin B. The hexadienyl group is produced by the highly reducing polyketide synthase cnsI, before being hydrolytically removed from cnsI by the serine hydrolase cnsH, converted into hexadienyl-CoA by the CoA ligase cnsG, and then transferred to communesin I by cnsK. Surprisingly, cnsK may also be a promiscuous acyltransferase that can tolerate a range of acyl groups, including acetyl-, propionyl-, and butyryl-CoA, which lead to communesins A, G and H respectively. The roles of the alpha-ketoglutarate-dependent dioxygenases cnsM and cnsP have still to be determined. The protein is Aurantioclavine synthase cnsA of Penicillium expansum (Blue mold rot fungus).